We begin with the raw amino-acid sequence, 546 residues long: CTP synthase (546 aa).

An amidoligase domain region spans residues 1–269 (MADTKYIFVT…DKVTLKKLAL (269 aa)). S15 is a CTP binding site. Position 15 (S15) interacts with UTP. 16 to 21 (SLGKGI) serves as a coordination point for ATP. Residue Y56 participates in L-glutamine binding. D73 contributes to the ATP binding site. Residues D73 and E143 each coordinate Mg(2+). CTP contacts are provided by residues 150–152 (DIE), 190–195 (KTKPTQ), and K226. UTP is bound by residues 190-195 (KTKPTQ) and K226. Residues 295 to 537 (HIGLIGKYVE…VKAAHEHSVK (243 aa)) enclose the Glutamine amidotransferase type-1 domain. G357 lines the L-glutamine pocket. C384 serves as the catalytic Nucleophile; for glutamine hydrolysis. L-glutamine is bound by residues 385–388 (LGMQ), E408, and R465. Active-site residues include H510 and E512.

This sequence belongs to the CTP synthase family. As to quaternary structure, homotetramer.

The catalysed reaction is UTP + L-glutamine + ATP + H2O = CTP + L-glutamate + ADP + phosphate + 2 H(+). It carries out the reaction L-glutamine + H2O = L-glutamate + NH4(+). It catalyses the reaction UTP + NH4(+) + ATP = CTP + ADP + phosphate + 2 H(+). Its pathway is pyrimidine metabolism; CTP biosynthesis via de novo pathway; CTP from UDP: step 2/2. With respect to regulation, allosterically activated by GTP, when glutamine is the substrate; GTP has no effect on the reaction when ammonia is the substrate. The allosteric effector GTP functions by stabilizing the protein conformation that binds the tetrahedral intermediate(s) formed during glutamine hydrolysis. Inhibited by the product CTP, via allosteric rather than competitive inhibition. Its function is as follows. Catalyzes the ATP-dependent amination of UTP to CTP with either L-glutamine or ammonia as the source of nitrogen. Regulates intracellular CTP levels through interactions with the four ribonucleotide triphosphates. In Christiangramia forsetii (strain DSM 17595 / CGMCC 1.15422 / KT0803) (Gramella forsetii), this protein is CTP synthase.